Reading from the N-terminus, the 386-residue chain is Bifunctional enzyme IspD/IspF (386 aa).

Residues 1-231 are 2-C-methyl-D-erythritol 4-phosphate cytidylyltransferase; that stretch reads MKNGAVIIPA…REKKEPMQKI (231 aa). Residues 232–386 form a 2-C-methyl-D-erythritol 2,4-cyclodiphosphate synthase region; that stretch reads RIGHGFDAHQ…SCHAVVLLQQ (155 aa). Aspartate 238 and histidine 240 together coordinate a divalent metal cation. 4-CDP-2-C-methyl-D-erythritol 2-phosphate contacts are provided by residues 238–240 and 264–265; these read DAH and HS. A divalent metal cation is bound at residue histidine 272. Residues 286–288, 362–365, tyrosine 369, and arginine 372 each bind 4-CDP-2-C-methyl-D-erythritol 2-phosphate; these read DIG and TTTE.

The protein in the N-terminal section; belongs to the IspD/TarI cytidylyltransferase family. IspD subfamily. It in the C-terminal section; belongs to the IspF family. The cofactor is a divalent metal cation.

The catalysed reaction is 2-C-methyl-D-erythritol 4-phosphate + CTP + H(+) = 4-CDP-2-C-methyl-D-erythritol + diphosphate. The enzyme catalyses 4-CDP-2-C-methyl-D-erythritol 2-phosphate = 2-C-methyl-D-erythritol 2,4-cyclic diphosphate + CMP. The protein operates within isoprenoid biosynthesis; isopentenyl diphosphate biosynthesis via DXP pathway; isopentenyl diphosphate from 1-deoxy-D-xylulose 5-phosphate: step 2/6. It participates in isoprenoid biosynthesis; isopentenyl diphosphate biosynthesis via DXP pathway; isopentenyl diphosphate from 1-deoxy-D-xylulose 5-phosphate: step 4/6. Bifunctional enzyme that catalyzes the formation of 4-diphosphocytidyl-2-C-methyl-D-erythritol from CTP and 2-C-methyl-D-erythritol 4-phosphate (MEP) (IspD), and catalyzes the conversion of 4-diphosphocytidyl-2-C-methyl-D-erythritol 2-phosphate (CDP-ME2P) to 2-C-methyl-D-erythritol 2,4-cyclodiphosphate (ME-CPP) with a corresponding release of cytidine 5-monophosphate (CMP) (IspF). In Desulfotalea psychrophila (strain LSv54 / DSM 12343), this protein is Bifunctional enzyme IspD/IspF.